Reading from the N-terminus, the 999-residue chain is MKYATGTDNAMTSGISGQTNNSNSVSNEMQPTTSTPTAVHKEATSTATTTATYANGNPNSNANPSQSQPSNALFCEQVTTVTNLFEKWNDCERTVVMYALLKRLRYPSLKFLQYSIDSNLTQNLGTSQTNLSSVVIDINANNPVYLQNLLNAYKTFQPCDLLDAMSSSSSDKDSMPCYGSDFQITTSAQCDERKLYARKEDILHEVLNMLPLLKPGNDEAKLIYLTLIPVAVKDTMQQIVPTELVQQIFSYLLIHPAITSEDRRSLNIWLRHLEDHIQAAAAGLTNRSYFLQPSPQLVAGGSSTGSGSCSSSATSSSTASCSSVASSSMCPASGSRSSRTNDWQTIAPPSKQLQNKLAGDWRGSGGGSSSGSINPLCDNLNGITLNELASSQNSLGLSLEGSSSLVNGVVAGAGSMLGIGGGDDHDTSFSKNGTEILDFDPVTADMGEACSLASSSLCGRSGGNPVEDRSQPPPNLQQQLLQPPPYASILMGNVGDQFGEINRWSLDSKIAALKTRRSNSLTTQTISSCSSSSNSSVITVNDNCSNSTENLAQFANKPRSFSLSIEHQRGALINSGSDTRLDEFKPNYIKFHTRNVGMSGIGLWLKSLRLHKYIELFKNMTYEEMLLITEDFLQSVGVTKGASHKLALCIDKLKERANILNRVEQDLLTGQMELSTAVEELTNIVLTPMKPLESPGPPEENIGLRFLKVIDIVTNTLQQDPYAAQDDETLGVLMWILDRSIHNEAFMNHASQLKDLKFKLSKMKISMVPKMHHVKPAGVGPNNGNINKPRWNGKTRKCDTKNGSNDRINNRKNSNDMLNFSLNCLPHPLPHHSQQPPPPLPQFDYNGYGGGPSHQPQYKSSSYPSFMGNPQQQPPPPPPSKAHHHAQQMQQMLQQHNHFPALPQQTPPQSHRRSLNNLILVTGGPQQPQQMIFKPGQGVLTNNGSNDNLGLERNQQPQQQQQQRKLSGGVSSVEQQPKKTMAAVVMENLAKFDQHFTLF.

Residues methionine 1–threonine 37 are compositionally biased toward polar residues. Disordered stretches follow at residues methionine 1–serine 45, threonine 50–proline 69, and cysteine 321–serine 370. The segment covering cysteine 321 to serine 338 has biased composition (low complexity). Serine 564 and serine 575 each carry phosphoserine. The interval glutamate 583–methionine 763 is interaction with cup. Positions glycine 600 to lysine 654 constitute an SAM domain. Residues histidine 773–methionine 892 are disordered. Polar residues-rich tracts occupy residues lysine 801–leucine 822 and histidine 854–proline 864. Serine 972 is subject to Phosphoserine.

The protein belongs to the SMAUG family. Interacts with oskar (osk). Binds to the 3'-UTR of nos. Interacts with cup, which in turn recruits eIF4-E, leading to an indirect interaction between smg and eIF4-E that prevents mRNA translation.

It is found in the cytoplasm. Translation regulator that binds to the 3'-UTR of specific mRNAs such as nanos (nos) and prevent their translation. Prevents translation of unlocalized nos in the bulk cytoplasm via the recruitment of cup. In Drosophila yakuba (Fruit fly), this protein is Protein Smaug (smg).